The primary structure comprises 317 residues: Small ribosomal subunit protein RACK1 (317 aa).

WD repeat units follow at residues 13-44, 61-91, 103-133, 146-178, 190-220, 231-260, and 281-311; these read GHSG…IMWK, GHSH…RLWD, GHTK…KLWN, GHTE…KVWN, GHTG…MLWD, DSGD…KIWD, and AEPP…RVWQ.

The protein belongs to the WD repeat G protein beta family. Ribosomal protein RACK1 subfamily.

The protein localises to the cytoplasm. Involved in the recruitment, assembly and/or regulation of a variety of signaling molecules. Interacts with a wide variety of proteins and plays a role in many cellular processes. Required for VANGL2 membrane localization, inhibits Wnt signaling and regulates cellular polarization and oriented cell division during gastrulation. This Oreochromis niloticus (Nile tilapia) protein is Small ribosomal subunit protein RACK1 (gnb2l1).